The following is a 356-amino-acid chain: GTPase Obg (356 aa).

Positions 1-159 (MKFLDEAKVY…RWIWLRMKLI (159 aa)) constitute an Obg domain. Positions 160-327 (ADAGLVGLPN…ALRKLADVIS (168 aa)) constitute an OBG-type G domain. Residues 166 to 173 (GLPNAGKS), 191 to 195 (FTTLH), 212 to 215 (DIPG), 279 to 282 (NKID), and 308 to 310 (SGA) contribute to the GTP site. Positions 173 and 193 each coordinate Mg(2+). Residues 332 to 356 (SIKAKSTSDSAATEEPWAAPLPPQG) are disordered.

It belongs to the TRAFAC class OBG-HflX-like GTPase superfamily. OBG GTPase family. As to quaternary structure, monomer. It depends on Mg(2+) as a cofactor.

Its subcellular location is the cytoplasm. Its function is as follows. An essential GTPase which binds GTP, GDP and possibly (p)ppGpp with moderate affinity, with high nucleotide exchange rates and a fairly low GTP hydrolysis rate. Plays a role in control of the cell cycle, stress response, ribosome biogenesis and in those bacteria that undergo differentiation, in morphogenesis control. The protein is GTPase Obg of Bradyrhizobium sp. (strain BTAi1 / ATCC BAA-1182).